A 207-amino-acid polypeptide reads, in one-letter code: Large ribosomal subunit protein uL4 (207 aa).

A disordered region spans residues Glu56–Gly76. The span at Gly60 to Gly71 shows a compositional bias: basic residues.

It belongs to the universal ribosomal protein uL4 family. Part of the 50S ribosomal subunit.

One of the primary rRNA binding proteins, this protein initially binds near the 5'-end of the 23S rRNA. It is important during the early stages of 50S assembly. It makes multiple contacts with different domains of the 23S rRNA in the assembled 50S subunit and ribosome. Functionally, forms part of the polypeptide exit tunnel. The protein is Large ribosomal subunit protein uL4 of Desulfitobacterium hafniense (strain DSM 10664 / DCB-2).